A 396-amino-acid chain; its full sequence is Lysophospholipid transporter LplT (396 aa).

Over 1-17 (MSESVHTNTSLWSKGMK) the chain is Periplasmic. The helical transmembrane segment at 18-38 (AVIVAQFLSAFGDNALLFATL) threads the bilayer. The Cytoplasmic segment spans residues 39–52 (ALLKAQFYPEWSQP). Residues 53–73 (ILQMVFVGAYILLAPFVGQVA) traverse the membrane as a helical segment. Residues 74 to 90 (DSFAKGRVMMFANGLKL) lie on the Periplasmic side of the membrane. A helical membrane pass occupies residues 91 to 111 (LGAASICFGINPFLGYTLVGV). The Cytoplasmic segment spans residues 112–144 (GAAAYSPAKYGILGELTTGSKLVKANGLMEASA). Residues 145-165 (IAAILLGSVAGGVLADWHVLV) form a helical membrane-spanning segment. A topological domain (periplasmic) is located at residue alanine 166. The helical transmembrane segment at 167-187 (LAACALAYGGAVVANIYIPKL) threads the bilayer. Residues 188–225 (AARPGQSWNLINMTRSFLNACTSLWCNGETRFSLVGTS) lie on the Cytoplasmic side of the membrane. A helical transmembrane segment spans residues 226 to 246 (LFWGAGVTLRFLLVLWVPVAL). Over 247–255 (GITDNATPT) the chain is Periplasmic. Residues 256–276 (YLNAMVAIGIVVGAGAAAKLV) form a helical membrane-spanning segment. Residues 277 to 279 (TLE) lie on the Cytoplasmic side of the membrane. Residues 280–300 (TVSRCMPAGILIGVVVPIFSL) form a helical membrane-spanning segment. Residues 301-303 (QHE) are Periplasmic-facing. Residues 304–324 (LLPAYALLMLIGVLGGFFVVP) traverse the membrane as a helical segment. The Cytoplasmic segment spans residues 325–342 (LNALLQERGKKSVGAGNA). Residues 343 to 363 (IAVQNLGENSAMLLMLGIYSL) form a helical membrane-spanning segment. Residues 364–365 (AV) are Periplasmic-facing. Residues 366–386 (MVGIPVVPIGIGFGALFALAI) form a helical membrane-spanning segment. Residues 387-396 (TALWIWQRRH) lie on the Cytoplasmic side of the membrane.

The protein belongs to the major facilitator superfamily. LplT (TC 2.A.1.42) family.

It is found in the cell inner membrane. In terms of biological role, catalyzes the facilitated diffusion of 2-acyl-glycero-3-phosphoethanolamine (2-acyl-GPE) into the cell. This Shigella flexneri protein is Lysophospholipid transporter LplT.